We begin with the raw amino-acid sequence, 477 residues long: tRNA-2-methylthio-N(6)-dimethylallyladenosine synthase (477 aa).

Positions 3–120 (KKLFIKTWGC…LPEMINQIKG (118 aa)) constitute an MTTase N-terminal domain. [4Fe-4S] cluster is bound by residues cysteine 12, cysteine 49, cysteine 83, cysteine 157, cysteine 161, and cysteine 164. Residues 143–375 (KAEGPTAFVS…QNRITQQALR (233 aa)) form the Radical SAM core domain. A TRAM domain is found at 378–441 (RNMIDSEQRV…ANSLRGDVLR (64 aa)).

Belongs to the methylthiotransferase family. MiaB subfamily. As to quaternary structure, monomer. It depends on [4Fe-4S] cluster as a cofactor.

The protein resides in the cytoplasm. The catalysed reaction is N(6)-dimethylallyladenosine(37) in tRNA + (sulfur carrier)-SH + AH2 + 2 S-adenosyl-L-methionine = 2-methylsulfanyl-N(6)-dimethylallyladenosine(37) in tRNA + (sulfur carrier)-H + 5'-deoxyadenosine + L-methionine + A + S-adenosyl-L-homocysteine + 2 H(+). In terms of biological role, catalyzes the methylthiolation of N6-(dimethylallyl)adenosine (i(6)A), leading to the formation of 2-methylthio-N6-(dimethylallyl)adenosine (ms(2)i(6)A) at position 37 in tRNAs that read codons beginning with uridine. In Pseudoalteromonas atlantica (strain T6c / ATCC BAA-1087), this protein is tRNA-2-methylthio-N(6)-dimethylallyladenosine synthase.